Here is a 299-residue protein sequence, read N- to C-terminus: Methionyl-tRNA formyltransferase (299 aa).

109 to 112 is a binding site for (6S)-5,6,7,8-tetrahydrofolate; sequence SLLP.

Belongs to the Fmt family.

It catalyses the reaction L-methionyl-tRNA(fMet) + (6R)-10-formyltetrahydrofolate = N-formyl-L-methionyl-tRNA(fMet) + (6S)-5,6,7,8-tetrahydrofolate + H(+). Attaches a formyl group to the free amino group of methionyl-tRNA(fMet). The formyl group appears to play a dual role in the initiator identity of N-formylmethionyl-tRNA by promoting its recognition by IF2 and preventing the misappropriation of this tRNA by the elongation apparatus. The sequence is that of Methionyl-tRNA formyltransferase from Wolbachia pipientis subsp. Culex pipiens (strain wPip).